The sequence spans 421 residues: 3-phosphoshikimate 1-carboxyvinyltransferase (421 aa).

Residues K20, S21, and R25 each contribute to the 3-phosphoshikimate site. K20 provides a ligand contact to phosphoenolpyruvate. Phosphoenolpyruvate is bound by residues G90 and R117. S162, S163, Q164, S190, D304, and K331 together coordinate 3-phosphoshikimate. Q164 contacts phosphoenolpyruvate. Residue D304 is the Proton acceptor of the active site. Residues R335 and R376 each contribute to the phosphoenolpyruvate site.

It belongs to the EPSP synthase family. Monomer.

Its subcellular location is the cytoplasm. The catalysed reaction is 3-phosphoshikimate + phosphoenolpyruvate = 5-O-(1-carboxyvinyl)-3-phosphoshikimate + phosphate. It functions in the pathway metabolic intermediate biosynthesis; chorismate biosynthesis. Catalyzes the transfer of the enolpyruvyl moiety of phosphoenolpyruvate (PEP) to the 5-hydroxyl of shikimate-3-phosphate (S3P) to produce enolpyruvyl shikimate-3-phosphate and inorganic phosphate. The chain is 3-phosphoshikimate 1-carboxyvinyltransferase from Methanothrix thermoacetophila (strain DSM 6194 / JCM 14653 / NBRC 101360 / PT) (Methanosaeta thermophila).